Here is a 143-residue protein sequence, read N- to C-terminus: Small ribosomal subunit protein uS11c (143 aa).

Belongs to the universal ribosomal protein uS11 family. As to quaternary structure, part of the 30S ribosomal subunit.

The protein resides in the plastid. It is found in the chloroplast. The sequence is that of Small ribosomal subunit protein uS11c from Brachypodium distachyon (Purple false brome).